A 436-amino-acid polypeptide reads, in one-letter code: Histone acetyltransferase type B subunit 2 (436 aa).

WD repeat units follow at residues 136–176 (DHKG…SLPT), 187–227 (GHTK…KGNK), 237–277 (HHSS…TTRA), 284–324 (QHRD…TKLH), and 328–368 (SHTD…EEQT). The interaction with the histone H4 N-terminus stretch occupies residues 370 to 374 (EDAQD). One copy of the WD 6 repeat lies at 385–425 (GHTNRISDFSWNLNDPWVLCSAAEDNLLQVWKVADAIVGKD).

The protein belongs to the WD repeat RBAP46/RBAP48/MSI1 family. As to quaternary structure, component of the HAT-B complex composed of at least hat1 and hat2. The HAT-B complex binds to histone H4 tail.

The protein resides in the cytoplasm. It localises to the nucleus. Its function is as follows. Regulatory subunit of the histone acetylase B (HAT-B) complex. The complex acetylates 'Lys-12' of histone H4 which is required for telomeric silencing. This is Histone acetyltransferase type B subunit 2 (hat2) from Aspergillus fumigatus (strain ATCC MYA-4609 / CBS 101355 / FGSC A1100 / Af293) (Neosartorya fumigata).